Reading from the N-terminus, the 205-residue chain is Large ribosomal subunit protein uL3 (205 aa).

Belongs to the universal ribosomal protein uL3 family. In terms of assembly, part of the 50S ribosomal subunit. Forms a cluster with proteins L14 and L19.

Functionally, one of the primary rRNA binding proteins, it binds directly near the 3'-end of the 23S rRNA, where it nucleates assembly of the 50S subunit. The protein is Large ribosomal subunit protein uL3 of Porphyromonas gingivalis (strain ATCC 33277 / DSM 20709 / CIP 103683 / JCM 12257 / NCTC 11834 / 2561).